Consider the following 86-residue polypeptide: Progonadoliberin IIB (86 aa).

Positions 1–24 (MVHICRLFVVMGMLMFLSVQFASS) are cleaved as a signal peptide. Q25 carries the pyrrolidone carboxylic acid modification. G34 carries the glycine amide modification.

It belongs to the GnRH family. Olfactory bulbs, hypothalamus and telencephalon, midbrain and posterior brain areas.

The protein localises to the secreted. Its function is as follows. Stimulates the secretion of gonadotropins. The sequence is that of Progonadoliberin IIB (gnrh2b) from Carassius auratus (Goldfish).